The chain runs to 231 residues: Adenosylcobinamide-GDP ribazoletransferase (231 aa).

6 helical membrane passes run 29–49 (ICAYFTFVGYLAGVFYFSMKL), 53–73 (NFLWTLLSVALGFYLFDLFHF), 101–121 (IGPFAFFYAALYIVAYLYAFL), 126–146 (IDLIYVAVLGRFSMNILLHFG), 167–187 (LISLVFTIPLVYFPLNYIISL), and 211–231 (DVLGATCMFSQLSIMVALSLI).

The protein belongs to the CobS family. It depends on Mg(2+) as a cofactor.

It is found in the cell inner membrane. It catalyses the reaction alpha-ribazole + adenosylcob(III)inamide-GDP = adenosylcob(III)alamin + GMP + H(+). The enzyme catalyses alpha-ribazole 5'-phosphate + adenosylcob(III)inamide-GDP = adenosylcob(III)alamin 5'-phosphate + GMP + H(+). The protein operates within cofactor biosynthesis; adenosylcobalamin biosynthesis; adenosylcobalamin from cob(II)yrinate a,c-diamide: step 7/7. Joins adenosylcobinamide-GDP and alpha-ribazole to generate adenosylcobalamin (Ado-cobalamin). Also synthesizes adenosylcobalamin 5'-phosphate from adenosylcobinamide-GDP and alpha-ribazole 5'-phosphate. This chain is Adenosylcobinamide-GDP ribazoletransferase, found in Kosmotoga olearia (strain ATCC BAA-1733 / DSM 21960 / TBF 19.5.1).